Here is a 272-residue protein sequence, read N- to C-terminus: 4-hydroxy-tetrahydrodipicolinate reductase (272 aa).

Residues 10–15 (GAGGRM), E36, 100–102 (GTT), and 124–127 (SGNM) contribute to the NAD(+) site. H157 acts as the Proton donor/acceptor in catalysis. H158 is a (S)-2,3,4,5-tetrahydrodipicolinate binding site. Residue K161 is the Proton donor of the active site. 167 to 168 (GT) serves as a coordination point for (S)-2,3,4,5-tetrahydrodipicolinate.

Belongs to the DapB family.

It localises to the cytoplasm. It carries out the reaction (S)-2,3,4,5-tetrahydrodipicolinate + NAD(+) + H2O = (2S,4S)-4-hydroxy-2,3,4,5-tetrahydrodipicolinate + NADH + H(+). The enzyme catalyses (S)-2,3,4,5-tetrahydrodipicolinate + NADP(+) + H2O = (2S,4S)-4-hydroxy-2,3,4,5-tetrahydrodipicolinate + NADPH + H(+). The protein operates within amino-acid biosynthesis; L-lysine biosynthesis via DAP pathway; (S)-tetrahydrodipicolinate from L-aspartate: step 4/4. Catalyzes the conversion of 4-hydroxy-tetrahydrodipicolinate (HTPA) to tetrahydrodipicolinate. The polypeptide is 4-hydroxy-tetrahydrodipicolinate reductase (Bradyrhizobium sp. (strain ORS 278)).